The following is a 364-amino-acid chain: Protein-glutamate methylesterase/protein-glutamine glutaminase 1 (364 aa).

The region spanning 6-123 (KVLCVDDSAL…RDGMLDYSEK (118 aa)) is the Response regulatory domain. Aspartate 57 is modified (4-aspartylphosphate). The region spanning 165-357 (LVSTEKLIIV…RRIMARLASM (193 aa)) is the CheB-type methylesterase domain. Residues serine 177, histidine 203, and aspartate 299 contribute to the active site.

It belongs to the CheB family. Post-translationally, phosphorylated by CheA. Phosphorylation of the N-terminal regulatory domain activates the methylesterase activity.

It is found in the cytoplasm. It carries out the reaction [protein]-L-glutamate 5-O-methyl ester + H2O = L-glutamyl-[protein] + methanol + H(+). The catalysed reaction is L-glutaminyl-[protein] + H2O = L-glutamyl-[protein] + NH4(+). Functionally, involved in chemotaxis. Part of a chemotaxis signal transduction system that modulates chemotaxis in response to various stimuli. Catalyzes the demethylation of specific methylglutamate residues introduced into the chemoreceptors (methyl-accepting chemotaxis proteins or MCP) by CheR. Also mediates the irreversible deamidation of specific glutamine residues to glutamic acid. The protein is Protein-glutamate methylesterase/protein-glutamine glutaminase 1 of Burkholderia mallei (strain ATCC 23344).